Consider the following 128-residue polypeptide: Crossover junction endodeoxyribonuclease Hjc (128 aa).

A Mg(2+)-binding site is contributed by E10. S30 is a catalytic residue. Positions 34 and 47 each coordinate Mg(2+).

The protein belongs to the Holliday junction resolvase Hjc family. In terms of assembly, homodimer. It depends on Mg(2+) as a cofactor.

The enzyme catalyses Endonucleolytic cleavage at a junction such as a reciprocal single-stranded crossover between two homologous DNA duplexes (Holliday junction).. Functionally, a structure-specific endonuclease that resolves Holliday junction (HJ) intermediates during genetic recombination. Cleaves 4-way DNA junctions introducing paired nicks in opposing strands, leaving a 5'-terminal phosphate and a 3'-terminal hydroxyl group that are subsequently ligated to produce recombinant products. This is Crossover junction endodeoxyribonuclease Hjc from Thermococcus kodakarensis (strain ATCC BAA-918 / JCM 12380 / KOD1) (Pyrococcus kodakaraensis (strain KOD1)).